Here is a 559-residue protein sequence, read N- to C-terminus: CTP synthase (559 aa).

The amidoligase domain stretch occupies residues 1–283 (MSTSRTTTNN…DTFLIRRLDL (283 aa)). A CTP-binding site is contributed by S25. S25 lines the UTP pocket. ATP contacts are provided by residues 26 to 31 (SLGKGL) and D83. Mg(2+) contacts are provided by D83 and E157. Residues 164–166 (DIE), 204–209 (KTKPTQ), and K240 contribute to the CTP site. Residues 204 to 209 (KTKPTQ) and K240 each bind UTP. The 250-residue stretch at 308 to 557 (TVGIVGKYVD…VAAALAAAVT (250 aa)) folds into the Glutamine amidotransferase type-1 domain. G371 serves as a coordination point for L-glutamine. The active-site Nucleophile; for glutamine hydrolysis is the C398. Residues 399-402 (LGLQ), E421, and R482 contribute to the L-glutamine site. Active-site residues include H530 and E532.

This sequence belongs to the CTP synthase family. As to quaternary structure, homotetramer.

The enzyme catalyses UTP + L-glutamine + ATP + H2O = CTP + L-glutamate + ADP + phosphate + 2 H(+). The catalysed reaction is L-glutamine + H2O = L-glutamate + NH4(+). It carries out the reaction UTP + NH4(+) + ATP = CTP + ADP + phosphate + 2 H(+). Its pathway is pyrimidine metabolism; CTP biosynthesis via de novo pathway; CTP from UDP: step 2/2. Its activity is regulated as follows. Allosterically activated by GTP, when glutamine is the substrate; GTP has no effect on the reaction when ammonia is the substrate. The allosteric effector GTP functions by stabilizing the protein conformation that binds the tetrahedral intermediate(s) formed during glutamine hydrolysis. Inhibited by the product CTP, via allosteric rather than competitive inhibition. Catalyzes the ATP-dependent amination of UTP to CTP with either L-glutamine or ammonia as the source of nitrogen. Regulates intracellular CTP levels through interactions with the four ribonucleotide triphosphates. In Corynebacterium efficiens (strain DSM 44549 / YS-314 / AJ 12310 / JCM 11189 / NBRC 100395), this protein is CTP synthase.